A 255-amino-acid chain; its full sequence is Probable pyridoxal 5'-phosphate synthase subunit PDX2 (255 aa).

Position 46-48 (46-48 (GES)) interacts with L-glutamine. The active-site Nucleophile is cysteine 78. L-glutamine-binding positions include arginine 108 and 142 to 143 (IR). Catalysis depends on charge relay system residues histidine 202 and glutamate 204. The segment at 225-255 (GASSSSSKTIVSVGETSAGPEPAKPDLPIFQ) is disordered.

This sequence belongs to the glutaminase PdxT/SNO family. Interacts with PDX1.1 or PDX1.3, but not with PDX1.2. Binds to RPA2A. In terms of tissue distribution, strongly expressed in roots, stems, leaves and flowers.

It localises to the cytoplasm. It carries out the reaction aldehydo-D-ribose 5-phosphate + D-glyceraldehyde 3-phosphate + L-glutamine = pyridoxal 5'-phosphate + L-glutamate + phosphate + 3 H2O + H(+). It catalyses the reaction L-glutamine + H2O = L-glutamate + NH4(+). It functions in the pathway cofactor biosynthesis; pyridoxal 5'-phosphate biosynthesis. Catalyzes the hydrolysis of glutamine to glutamate and ammonia as part of the biosynthesis of pyridoxal 5'-phosphate. The resulting ammonia molecule is channeled to the active site of PDX1. Involved in the indirect resistance to singlet oxygen-generating photosensitizers. The chain is Probable pyridoxal 5'-phosphate synthase subunit PDX2 (PDX2) from Arabidopsis thaliana (Mouse-ear cress).